The chain runs to 85 residues: Large ribosomal subunit protein bL27 (85 aa).

It belongs to the bacterial ribosomal protein bL27 family.

This is Large ribosomal subunit protein bL27 from Azobacteroides pseudotrichonymphae genomovar. CFP2.